The sequence spans 130 residues: Small ribosomal subunit protein uS11 (130 aa).

Belongs to the universal ribosomal protein uS11 family. As to quaternary structure, part of the 30S ribosomal subunit. Interacts with proteins S7 and S18. Binds to IF-3.

In terms of biological role, located on the platform of the 30S subunit, it bridges several disparate RNA helices of the 16S rRNA. Forms part of the Shine-Dalgarno cleft in the 70S ribosome. The polypeptide is Small ribosomal subunit protein uS11 (Acholeplasma laidlawii (strain PG-8A)).